A 391-amino-acid chain; its full sequence is Multidrug resistance protein MdtL (391 aa).

12 helical membrane passes run 4-24 (FLICSFALVLLYPAGIDMYLV), 42-62 (IAFSVYLAGMAAAMLFAGKVA), 69-89 (PVAIPGAALFIIASVFCSLAE), 93-113 (LFLAGRFLQGLGAGCCYVVAF), 131-151 (LLNGITCIIPVLAPVLGHLIM), 158-178 (SLFWAMATMGIAVLMLSLFIL), 203-222 (FFLSRVVITTLSVSVILTFV), 245-265 (ALTAGVSMTVSFSTPFALGIF), 269-289 (TLMITSQVLFLAAGITLAVSP), 293-313 (ISLFGITLICAGFSIGFGVAM), 324-346 (AGVASSTLGIAQVCGSSLWIWLA), and 363-383 (ACSIVSLLLIMFVTPGRPVAA).

Belongs to the major facilitator superfamily. DHA1 family. MdtL (TC 2.A.1.2.22) subfamily.

It is found in the cell inner membrane. In terms of biological role, confers resistance to chloramphenicol. The sequence is that of Multidrug resistance protein MdtL from Escherichia fergusonii (strain ATCC 35469 / DSM 13698 / CCUG 18766 / IAM 14443 / JCM 21226 / LMG 7866 / NBRC 102419 / NCTC 12128 / CDC 0568-73).